We begin with the raw amino-acid sequence, 175 residues long: Cytidylate kinase (175 aa).

Residue 7-15 (GQPGSGKTS) coordinates ATP.

This sequence belongs to the cytidylate kinase family. Type 2 subfamily.

It localises to the cytoplasm. It catalyses the reaction CMP + ATP = CDP + ADP. It carries out the reaction dCMP + ATP = dCDP + ADP. The polypeptide is Cytidylate kinase (Methanocella arvoryzae (strain DSM 22066 / NBRC 105507 / MRE50)).